The chain runs to 457 residues: Probable mitochondrial-processing peptidase subunit beta (457 aa).

Position 66 (H66) interacts with Zn(2+). Catalysis depends on E69, which acts as the Proton acceptor. H70 and E146 together coordinate Zn(2+).

The protein belongs to the peptidase M16 family. Heterodimer of mas2 (alpha) and qcr1 (beta) subunits, forming the mitochondrial processing protease (MPP) in which mas2 is involved in substrate recognition and binding and qcr1 is the catalytic subunit. The cofactor is Zn(2+).

It is found in the mitochondrion matrix. It catalyses the reaction Release of N-terminal transit peptides from precursor proteins imported into the mitochondrion, typically with Arg in position P2.. Binding to mas2 is required for catalytic activity. Functionally, catalytic subunit of the essential mitochondrial processing protease (MPP), which cleaves the mitochondrial sequence off newly imported precursors proteins. Preferentially, cleaves after an arginine at position P2. This is Probable mitochondrial-processing peptidase subunit beta (qcr1) from Schizosaccharomyces pombe (strain 972 / ATCC 24843) (Fission yeast).